A 67-amino-acid polypeptide reads, in one-letter code: UPF0253 protein VS_2370 (67 aa).

This sequence belongs to the UPF0253 family.

This chain is UPF0253 protein VS_2370, found in Vibrio atlanticus (strain LGP32) (Vibrio splendidus (strain Mel32)).